Reading from the N-terminus, the 31-residue chain is Cytochrome b6-f complex subunit 6 (31 aa).

A helical membrane pass occupies residues 3-23 (ILISYFCFLLIFFLFTLILFF).

The protein belongs to the PetL family. As to quaternary structure, the 4 large subunits of the cytochrome b6-f complex are cytochrome b6, subunit IV (17 kDa polypeptide, PetD), cytochrome f and the Rieske protein, while the 4 small subunits are PetG, PetL, PetM and PetN. The complex functions as a dimer.

The protein resides in the plastid. The protein localises to the chloroplast thylakoid membrane. In terms of biological role, component of the cytochrome b6-f complex, which mediates electron transfer between photosystem II (PSII) and photosystem I (PSI), cyclic electron flow around PSI, and state transitions. PetL is important for photoautotrophic growth as well as for electron transfer efficiency and stability of the cytochrome b6-f complex. The protein is Cytochrome b6-f complex subunit 6 of Gnetum parvifolium (Small-leaved jointfir).